Reading from the N-terminus, the 260-residue chain is UPF0294 protein YE0917 (260 aa).

The protein belongs to the UPF0294 family.

The protein localises to the cytoplasm. The protein is UPF0294 protein YE0917 of Yersinia enterocolitica serotype O:8 / biotype 1B (strain NCTC 13174 / 8081).